Reading from the N-terminus, the 442-residue chain is Serine hydroxymethyltransferase (442 aa).

Residues tyrosine 54, 100–102 (SGS), and histidine 236 each bind pyridoxal 5'-phosphate. Cysteines 125 and 364 form a disulfide. Lysine 237 carries the N6-(pyridoxal phosphate)lysine modification. Residue glycine 272 participates in pyridoxal 5'-phosphate binding.

It belongs to the SHMT family. As to quaternary structure, homodimer. Pyridoxal 5'-phosphate serves as cofactor.

The protein localises to the cytoplasm. It is found in the mitochondrion matrix. Its subcellular location is the plastid. The protein resides in the apicoplast. It localises to the nucleus. The catalysed reaction is (6R)-5,10-methylene-5,6,7,8-tetrahydrofolate + glycine + H2O = (6S)-5,6,7,8-tetrahydrofolate + L-serine. It participates in one-carbon metabolism; tetrahydrofolate interconversion. With respect to regulation, redox regulation; active in reducing conditions, inactive in oxidizing conditions. The reduction of the cysteine pairs allows the access binding of the tetrahydrofolate substrate to its binding site. This mechanism appears to be unique to Plasmodium species. Functionally, catalyzes the interconversion of serine to glycine accompanied with the production of 5,10-methylenetetrahydrofolate, a source of one-carbon units used by thymidylate synthase to convert dUMP to dTMP for DNA synthesis. Binds to its own mRNA and to the mRNA of bifunctional dihydrofolate reductase-thymidylate synthase (DHFR-TS) in vitro; the physiological relevance of this interaction is not clear. The polypeptide is Serine hydroxymethyltransferase (Plasmodium falciparum (isolate 3D7)).